We begin with the raw amino-acid sequence, 175 residues long: Urease accessory protein UreE (175 aa).

The interval 134-175 is disordered; sequence FQPESGAYGGGHHHGDESATDLHNPGHGPHRSVPKIHEFKPR.

Belongs to the UreE family.

The protein resides in the cytoplasm. Involved in urease metallocenter assembly. Binds nickel. Probably functions as a nickel donor during metallocenter assembly. This chain is Urease accessory protein UreE, found in Dechloromonas aromatica (strain RCB).